A 198-amino-acid chain; its full sequence is Molybdenum cofactor guanylyltransferase (198 aa).

GTP-binding positions include 14 to 16, lysine 27, aspartate 73, and aspartate 103; that span reads LAG. Aspartate 103 serves as a coordination point for Mg(2+).

Belongs to the MobA family. As to quaternary structure, monomer. The cofactor is Mg(2+).

The protein localises to the cytoplasm. The catalysed reaction is Mo-molybdopterin + GTP + H(+) = Mo-molybdopterin guanine dinucleotide + diphosphate. Its function is as follows. Transfers a GMP moiety from GTP to Mo-molybdopterin (Mo-MPT) cofactor (Moco or molybdenum cofactor) to form Mo-molybdopterin guanine dinucleotide (Mo-MGD) cofactor. The sequence is that of Molybdenum cofactor guanylyltransferase from Pseudomonas aeruginosa (strain ATCC 15692 / DSM 22644 / CIP 104116 / JCM 14847 / LMG 12228 / 1C / PRS 101 / PAO1).